Here is a 66-residue protein sequence, read N- to C-terminus: Large ribosomal subunit protein bL31 (66 aa).

Cys16, Cys18, Cys36, and Cys39 together coordinate Zn(2+).

This sequence belongs to the bacterial ribosomal protein bL31 family. Type A subfamily. In terms of assembly, part of the 50S ribosomal subunit. Zn(2+) is required as a cofactor.

Its function is as follows. Binds the 23S rRNA. This Campylobacter curvus (strain 525.92) protein is Large ribosomal subunit protein bL31.